The sequence spans 507 residues: Alkyl hydroperoxide reductase subunit F (507 aa).

207 to 222 (DVLIVGGGPASGSAAI) lines the FAD pocket. Cys335 and Cys338 are disulfide-bonded. 347–361 (DVAVIGGGNSGVEAA) is an NAD(+) binding site. Residue 467–477 (TNVPGIFAAGD) participates in FAD binding.

It belongs to the class-II pyridine nucleotide-disulfide oxidoreductase family. In terms of assembly, homodimer. FAD serves as cofactor.

In terms of biological role, serves to protect the cell against DNA damage by alkyl hydroperoxides. It can use either NADH or NADPH as electron donor for direct reduction of redox dyes or of alkyl hydroperoxides when combined with the AhpC protein. The protein is Alkyl hydroperoxide reductase subunit F (ahpF) of Staphylococcus aureus (strain MSSA476).